The primary structure comprises 331 residues: Ketol-acid reductoisomerase (NADP(+)) (331 aa).

One can recognise a KARI N-terminal Rossmann domain in the interval 2 to 182; the sequence is ARMYYDEDGN…GGTRAGILET (181 aa). Residues 25-28, Ser51, Ser53, and 83-86 each bind NADP(+); these read YGSQ and DEVQ. His108 is an active-site residue. An NADP(+)-binding site is contributed by Gly134. The region spanning 183-328 is the KARI C-terminal knotted domain; sequence SFREETETDL…KDLRAMFSWL (146 aa). Mg(2+)-binding residues include Asp191, Glu195, Glu227, and Glu231. Position 252 (Ser252) interacts with substrate.

This sequence belongs to the ketol-acid reductoisomerase family. Mg(2+) serves as cofactor.

It carries out the reaction (2R)-2,3-dihydroxy-3-methylbutanoate + NADP(+) = (2S)-2-acetolactate + NADPH + H(+). It catalyses the reaction (2R,3R)-2,3-dihydroxy-3-methylpentanoate + NADP(+) = (S)-2-ethyl-2-hydroxy-3-oxobutanoate + NADPH + H(+). Its pathway is amino-acid biosynthesis; L-isoleucine biosynthesis; L-isoleucine from 2-oxobutanoate: step 2/4. It participates in amino-acid biosynthesis; L-valine biosynthesis; L-valine from pyruvate: step 2/4. In terms of biological role, involved in the biosynthesis of branched-chain amino acids (BCAA). Catalyzes an alkyl-migration followed by a ketol-acid reduction of (S)-2-acetolactate (S2AL) to yield (R)-2,3-dihydroxy-isovalerate. In the isomerase reaction, S2AL is rearranged via a Mg-dependent methyl migration to produce 3-hydroxy-3-methyl-2-ketobutyrate (HMKB). In the reductase reaction, this 2-ketoacid undergoes a metal-dependent reduction by NADPH to yield (R)-2,3-dihydroxy-isovalerate. The protein is Ketol-acid reductoisomerase (NADP(+)) of Gloeothece citriformis (strain PCC 7424) (Cyanothece sp. (strain PCC 7424)).